The sequence spans 195 residues: A-type ATP synthase subunit E (195 aa).

Belongs to the V-ATPase E subunit family. As to quaternary structure, has multiple subunits with at least A(3), B(3), C, D, E, F, H, I and proteolipid K(x).

It is found in the cell membrane. Its function is as follows. Component of the A-type ATP synthase that produces ATP from ADP in the presence of a proton gradient across the membrane. This chain is A-type ATP synthase subunit E, found in Halobacterium salinarum (strain ATCC 29341 / DSM 671 / R1).